The chain runs to 347 residues: uncharacterized protein (347 aa).

It belongs to the MG067/MG068/MG395 family.

This is an uncharacterized protein from Mycoplasma pneumoniae (strain ATCC 29342 / M129 / Subtype 1) (Mycoplasmoides pneumoniae).